We begin with the raw amino-acid sequence, 294 residues long: 4-hydroxy-tetrahydrodipicolinate synthase (294 aa).

A pyruvate-binding site is contributed by Thr-47. Tyr-135 acts as the Proton donor/acceptor in catalysis. The active-site Schiff-base intermediate with substrate is Lys-163. Thr-205 is a pyruvate binding site.

It belongs to the DapA family. Homotetramer; dimer of dimers.

The protein resides in the cytoplasm. It catalyses the reaction L-aspartate 4-semialdehyde + pyruvate = (2S,4S)-4-hydroxy-2,3,4,5-tetrahydrodipicolinate + H2O + H(+). The protein operates within amino-acid biosynthesis; L-lysine biosynthesis via DAP pathway; (S)-tetrahydrodipicolinate from L-aspartate: step 3/4. Its function is as follows. Catalyzes the condensation of (S)-aspartate-beta-semialdehyde [(S)-ASA] and pyruvate to 4-hydroxy-tetrahydrodipicolinate (HTPA). The sequence is that of 4-hydroxy-tetrahydrodipicolinate synthase from Rickettsia peacockii (strain Rustic).